We begin with the raw amino-acid sequence, 448 residues long: UDP-N-acetylmuramoylalanine--D-glutamate ligase (448 aa).

112-118 (GSNAKST) is a binding site for ATP.

It belongs to the MurCDEF family.

Its subcellular location is the cytoplasm. The catalysed reaction is UDP-N-acetyl-alpha-D-muramoyl-L-alanine + D-glutamate + ATP = UDP-N-acetyl-alpha-D-muramoyl-L-alanyl-D-glutamate + ADP + phosphate + H(+). The protein operates within cell wall biogenesis; peptidoglycan biosynthesis. In terms of biological role, cell wall formation. Catalyzes the addition of glutamate to the nucleotide precursor UDP-N-acetylmuramoyl-L-alanine (UMA). This is UDP-N-acetylmuramoylalanine--D-glutamate ligase from Acinetobacter baumannii (strain ATCC 17978 / DSM 105126 / CIP 53.77 / LMG 1025 / NCDC KC755 / 5377).